The chain runs to 682 residues: Zinc finger protein 16 (682 aa).

2 stretches are compositionally biased toward basic and acidic residues: residues 1 to 10 (MPSLRTRREE) and 113 to 125 (VSER…EGRR). Disordered stretches follow at residues 1 to 33 (MPSL…HVSD) and 112 to 134 (DVSE…SQEG). The tract at residues 62-210 (YQQPDCDTRT…GVPTAESPLI (149 aa)) is necessary for transcription activation. The C2H2-type 1; degenerate zinc finger occupies 209 to 231 (LICNECGKTFQGNPDLIQCQIVH). The C2H2-type 2; degenerate zinc finger occupies 237–259 (FMCDDCGKTFSQNSVLKNHHRSH). Residue K253 forms a Glycyl lysine isopeptide (Lys-Gly) (interchain with G-Cter in SUMO2) linkage. C2H2-type zinc fingers lie at residues 265 to 287 (YQCS…QSHH), 293 to 315 (YMCN…QKSH), 321 to 343 (YECN…QRIH), 349 to 371 (YVCS…HRTH), 377 to 399 (FECG…QRVH), 405 to 427 (YECN…HRVH), 433 to 455 (YKCS…RRIH), and 461 to 483 (HVCN…QIIH). Required for nuclear localization regions lie at residues 268-393 (SECG…AHLR) and 341-373 (RIHS…THTG). Positions 473 to 503 (SSVLRKHQIIHTGEKPYRCSVCGKAFSHSSA) are required for nuclear localization. The residue at position 487 (K487) is an N6-acetyllysine. 7 C2H2-type zinc fingers span residues 489-511 (YRCS…QGVH), 517-539 (YACH…QRVH), 545-567 (YECT…QRIH), 573-595 (HECN…QKVH), 601-623 (YTCV…QIIH), 629-651 (YKCS…QRIH), and 657-679 (YDCA…QLIH).

Belongs to the krueppel C2H2-type zinc-finger protein family. In terms of assembly, interacts with INCA1; the interaction inhibits INCA1 activity and induces the cell cycle process.

It is found in the nucleus. Acts as a transcriptional activator. Promotes cell proliferation by facilitating the cell cycle phase transition from the S to G2/M phase. Involved in both the hemin- and phorbol myristate acetate (PMA)-induced erythroid and megakaryocytic differentiation, respectively. Also plays a role as an inhibitor of cell apoptosis. In Gorilla gorilla gorilla (Western lowland gorilla), this protein is Zinc finger protein 16 (ZNF16).